The sequence spans 35 residues: Protein YbgU (35 aa).

The polypeptide is Protein YbgU (Escherichia coli (strain K12)).